Reading from the N-terminus, the 302-residue chain is Glycine--tRNA ligase alpha subunit (302 aa).

This sequence belongs to the class-II aminoacyl-tRNA synthetase family. As to quaternary structure, tetramer of two alpha and two beta subunits.

It localises to the cytoplasm. The catalysed reaction is tRNA(Gly) + glycine + ATP = glycyl-tRNA(Gly) + AMP + diphosphate. The sequence is that of Glycine--tRNA ligase alpha subunit from Enterococcus faecalis (strain ATCC 700802 / V583).